The following is a 2549-amino-acid chain: Serine/threonine-protein kinase mTOR (2549 aa).

An N-acetylmethionine modification is found at Met1. Positions 1–651 (MLGTGPAAAT…HVVSQTAVQV (651 aa)) are interaction with NBN. HEAT repeat units lie at residues 16–53 (SSNV…MELR), 55–99 (MSQE…VEGG), 100–137 (NATR…AMAG), 138–179 (DTFT…AISV), 180–220 (PTFF…LILT), 222–276 (QREP…RISS), 277–313 (MEGE…PRHI), 314–364 (TPFT…CCRD), 365–409 (LMEE…AFTD), 410–445 (TQYL…VAVR), 446–494 (SEFK…RAMG), 495–529 (PGIQ…RQIP), 530–563 (QLKK…GLAH), 564–596 (QLAS…EFEG), 597–636 (HSLT…SIHL), 637–683 (ISGH…DERF), 686–724 (HLAQ…MNPA), 727–766 (MPFL…NAPR), 769–811 (RPYM…VSGL), 814–853 (RKWV…STGY), 857–893 (PYRK…LLGA), 894–942 (LDPY…GNLP), 943–988 (LDEF…KCVQ), 989–1027 (FLPQ…KSHI), 1029–1068 (PYMD…GEFK), 1069–1105 (LYLP…LFGA), 1106–1144 (NLDD…RLTE), 1145–1188 (SLDF…GKKY), 1189–1225 (QIFI…LADE), 1226–1273 (EEDP…GAAR), 1274–1311 (RVSK…QAYN), and 1312–1345 (PMAR…ELAL). A Phosphoserine modification is found at Ser567. At Thr1162 the chain carries Phosphothreonine. The residue at position 1218 (Lys1218) is an N6-acetyllysine. The residue at position 1261 (Ser1261) is a Phosphoserine. 16 TPR repeats span residues 1346–1382 (TSQD…GIVL), 1383–1408 (LGER…QKGP), 1409–1442 (TPAI…HFGE), 1443–1473 (LEIQ…NKDD), 1474–1507 (PELM…VNDE), 1508–1541 (TQAK…RDTH), 1542–1574 (DGAF…LDAE), 1575–1614 (LTAM…RREI), 1615–1649 (IRQI…PHED), 1650–1693 (MRTW…PTVH), 1694–1731 (PQVT…AQHA), 1732–1786 (IATE…DRSW), 1787–1846 (YKAW…STEG), 1898–1930 (NNLQ…VKAI), 1931–1970 (QIDT…YHPQ), and 1971–2005 (ALIY…SNTL). An FAT domain is found at 1382-1982 (LLGERAAKCR…IYPLTVASKS (601 aa)). 1D-myo-inositol hexakisphosphate contacts are provided by Lys1662, Lys1702, and Arg1749. The segment at 1812–1867 (DEKKKLRHASGANITNATTAATTAATATTTASTEGSNSESEAESTENSPTPSPLQK) is disordered. The segment covering 1820–1860 (ASGANITNATTAATTAATATTTASTEGSNSESEAESTENSP) has biased composition (low complexity). The interval 2012 to 2144 (VSEELIRVAI…DLELAVPGTY (133 aa)) is sufficient for interaction with the FKBP1A/rapamycin complex. Lys2066 participates in a covalent cross-link: Glycyl lysine isopeptide (Lys-Gly) (interchain with G-Cter in ubiquitin). The 314-residue stretch at 2156–2469 (IAPSLQVITS…GVELGEPAHK (314 aa)) folds into the PI3K/PI4K catalytic domain. Ser2159 carries the phosphoserine; by TBK1 modification. The G-loop stretch occupies residues 2162-2168 (VITSKQR). At Thr2164 the chain carries Phosphothreonine. The ATP site is built by Ser2165 and Gln2167. Phosphothreonine; by PKB/AKT1 is present on Thr2173. Residues Leu2185, Lys2187, Glu2190, Tyr2225, Gly2238, Trp2239, Val2240, and Thr2245 each coordinate ATP. Residues 2258–2296 (KILLNIEHRIMLRMAPDYDHLTLMQKVEVFEHAVNNTAG) are interaction with MLST8. Residues 2335 to 2343 (GLGDRHPSN) are catalytic loop. Asn2343 lines the Mg(2+) pocket. The ATP site is built by Met2345 and Ile2356. The segment at 2355 to 2380 (HIDFGDCFEVAMTREKFPEKIPFRLT) is activation loop. Position 2357 (Asp2357) interacts with Mg(2+). Thr2446 carries the phosphothreonine; by RPS6KB1 modification. Ser2448 bears the Phosphoserine; by RPS6KB1 mark. At Ser2478 the chain carries Phosphoserine. Ser2481 bears the Phosphoserine; by autocatalysis mark. One can recognise an FATC domain in the interval 2517-2549 (DTLDVPTQVELLIKQATSHENLCQCYIGWCPFW).

This sequence belongs to the PI3/PI4-kinase family. In terms of assembly, part of the mechanistic target of rapamycin complex 1 (mTORC1) which contains MTOR, MLST8 and RPTOR. The mTORC1 complex is a 1 Md obligate dimer of two stoichiometric heterotetramers with overall dimensions of 290 A x 210 A x 135 A. It has a rhomboid shape and a central cavity, the dimeric interfaces are formed by interlocking interactions between the two MTOR and the two RPTOR subunits. The MLST8 subunit forms distal foot-like protuberances, and contacts only one MTOR within the complex, while the small AKT1S1/PRAS40 localizes to the midsection of the central core, in close proximity to RPTOR. mTORC1 associates with AKT1S1/PRAS40, which inhibits its activity by blocking MTOR substrate-recruitment site. Component of the mechanistic target of rapamycin complex 2 (mTORC2), consisting in two heterotretramers composed of MTOR, MLST8, RICTOR and MAPKAP1/SIN1. Interacts with PLPP7 and PML. Interacts with PRR5 and RICTOR; the interaction is direct within the mTORC2 complex and interaction with RICTOR is enhanced by deubiquitination of RICTOR by USP9X. mTORC1 and mTORC2 associate with DEPTOR, which regulates their activity. Interacts with WAC; WAC positively regulates MTOR activity by promoting the assembly of the TTT complex composed of TELO2, TTI1 and TTI2 and the RUVBL complex composed of RUVBL1 and RUVBL2 into the TTT-RUVBL complex which leads to the dimerization of the mTORC1 complex and its subsequent activation. Interacts with UBQLN1. Interacts with TTI1 and TELO2. Interacts with CLIP1; phosphorylates and regulates CLIP1. Interacts with NBN. Interacts with HTR6. Interacts with BRAT1. Interacts with MEAK7 (via C-terminal domain); the interaction increases upon nutrient stimulation. Interacts with TM4SF5; the interaction is positively regulated by arginine and is negatively regulated by leucine. Interacts with GPR137B. Interacts with NCKAP1L. Interacts with TPCN1 and TPCN2; the interaction is required for TPCN1 and TPCN2 sensitivity to ATP. Interacts with ATP6V1A and with CRYAB, forming a ternary complex. Interacts with SLC38A7; this interaction mediates the recruitment of mTORC1 to the lysosome and its subsequent activation. Interacts with TSPAN8. Post-translationally, autophosphorylates when part of mTORC1 or mTORC2. Phosphorylation at Ser-1261, Ser-2159 and Thr-2164 promotes autophosphorylation. Phosphorylated at Ser-2448 by RPS6KB1. Phosphorylation in the kinase domain modulates the interactions of MTOR with RPTOR and AKT1S1/PRAS40 and leads to increased intrinsic mTORC1 kinase activity. Phosphorylation at Ser-2159 by TBK1 in response to growth factors and pathogen recognition receptors promotes mTORC1 activity. Phosphorylation at Ser-2159 by TBK1 in response to EGF growth factor promotes mTORC2 activity, leading to AKT1 phosphorylation and activation. Phosphorylation at Thr-2173 in the ATP-binding region by AKT1 strongly reduces kinase activity. Ubiquitinated at Lys-2066 by the SCF(FBXO22) complex via 'Lys-27'-linked ubiquitination prevents mTORC1 substrate recruitment. In terms of tissue distribution, expressed in numerous tissues, with highest levels in testis.

The protein localises to the lysosome membrane. Its subcellular location is the endoplasmic reticulum membrane. It is found in the golgi apparatus membrane. The protein resides in the cell membrane. It localises to the mitochondrion outer membrane. The protein localises to the cytoplasm. Its subcellular location is the nucleus. It is found in the PML body. The protein resides in the microsome membrane. It localises to the cytoplasmic vesicle. The protein localises to the phagosome. The enzyme catalyses L-seryl-[protein] + ATP = O-phospho-L-seryl-[protein] + ADP + H(+). It carries out the reaction L-threonyl-[protein] + ATP = O-phospho-L-threonyl-[protein] + ADP + H(+). It catalyses the reaction L-tyrosyl-[protein] + ATP = O-phospho-L-tyrosyl-[protein] + ADP + H(+). Its activity is regulated as follows. The mTORC1 complex is activated in response to nutrients, growth factors or amino acids: activation requires relocalization of the mTORC1 complex to lysosomes that is mediated by the Ragulator complex, SLC38A9, and the Rag GTPases RagA/RRAGA, RagB/RRAGB, RagC/RRAGC and RagD/RRAGD. Activation of mTORC1 by growth factors such as insulin involves AKT1-mediated phosphorylation of TSC1-TSC2, which leads to the activation of the RHEB GTPase a potent activator of the protein kinase activity of mTORC1. Insulin-stimulated and amino acid-dependent phosphorylation at Ser-1261 promotes autophosphorylation and the activation of mTORC1. On the other hand, low cellular energy levels can inhibit mTORC1 through activation of PRKAA1 while hypoxia inhibits mTORC1 through a REDD1-dependent mechanism which may also require PRKAA1. The kinase activity of MTOR within the mTORC1 complex is positively regulated by MLST8. The kinase activity of MTOR is inhibited by DEPTOR and AKT1S1. The non-canonical mTORC1 complex is independent of the RHEB GTPase and specifically mediates phosphorylation of MiT/TFE factors TFEB and TFE3 but not other mTORC1 substrates: it is activated by FLCN, which activates Rag GTPases RagC/RRAGC and RagD/RRAGD. MTOR is the target of the immunosuppressive and anti-cancer drug rapamycin which acts in complex with FKBP1A/FKBP12, and specifically inhibits its kinase activity. mTORC2 is also activated by growth factors, but seems to be nutrient-insensitive. mTORC2 associates and is directly activated by ribosomes. mTORC2 may also be regulated by RHEB but in an indirect manner through the PI3K signaling pathway. Its function is as follows. Serine/threonine protein kinase which is a central regulator of cellular metabolism, growth and survival in response to hormones, growth factors, nutrients, energy and stress signals. MTOR directly or indirectly regulates the phosphorylation of at least 800 proteins. Functions as part of 2 structurally and functionally distinct signaling complexes mTORC1 and mTORC2 (mTOR complex 1 and 2). In response to nutrients, growth factors or amino acids, mTORC1 is recruited to the lysosome membrane and promotes protein, lipid and nucleotide synthesis by phosphorylating key regulators of mRNA translation and ribosome synthesis. This includes phosphorylation of EIF4EBP1 and release of its inhibition toward the elongation initiation factor 4E (eiF4E). Moreover, phosphorylates and activates RPS6KB1 and RPS6KB2 that promote protein synthesis by modulating the activity of their downstream targets including ribosomal protein S6, eukaryotic translation initiation factor EIF4B, and the inhibitor of translation initiation PDCD4. Stimulates the pyrimidine biosynthesis pathway, both by acute regulation through RPS6KB1-mediated phosphorylation of the biosynthetic enzyme CAD, and delayed regulation, through transcriptional enhancement of the pentose phosphate pathway which produces 5-phosphoribosyl-1-pyrophosphate (PRPP), an allosteric activator of CAD at a later step in synthesis, this function is dependent on the mTORC1 complex. Regulates ribosome synthesis by activating RNA polymerase III-dependent transcription through phosphorylation and inhibition of MAF1 an RNA polymerase III-repressor. Activates dormant ribosomes by mediating phosphorylation of SERBP1, leading to SERBP1 inactivation and reactivation of translation. In parallel to protein synthesis, also regulates lipid synthesis through SREBF1/SREBP1 and LPIN1. To maintain energy homeostasis mTORC1 may also regulate mitochondrial biogenesis through regulation of PPARGC1A. In the same time, mTORC1 inhibits catabolic pathways: negatively regulates autophagy through phosphorylation of ULK1. Under nutrient sufficiency, phosphorylates ULK1 at 'Ser-758', disrupting the interaction with AMPK and preventing activation of ULK1. Also prevents autophagy through phosphorylation of the autophagy inhibitor DAP. Also prevents autophagy by phosphorylating RUBCNL/Pacer under nutrient-rich conditions. Prevents autophagy by mediating phosphorylation of AMBRA1, thereby inhibiting AMBRA1 ability to mediate ubiquitination of ULK1 and interaction between AMBRA1 and PPP2CA. mTORC1 exerts a feedback control on upstream growth factor signaling that includes phosphorylation and activation of GRB10 a INSR-dependent signaling suppressor. Among other potential targets mTORC1 may phosphorylate CLIP1 and regulate microtubules. The mTORC1 complex is inhibited in response to starvation and amino acid depletion. The non-canonical mTORC1 complex, which acts independently of RHEB, specifically mediates phosphorylation of MiT/TFE factors MITF, TFEB and TFE3 in the presence of nutrients, promoting their cytosolic retention and inactivation. Upon starvation or lysosomal stress, inhibition of mTORC1 induces dephosphorylation and nuclear translocation of TFEB and TFE3, promoting their transcription factor activity. The mTORC1 complex regulates pyroptosis in macrophages by promoting GSDMD oligomerization. MTOR phosphorylates RPTOR which in turn inhibits mTORC1. As part of the mTORC2 complex, MTOR transduces signals from growth factors to pathways involved in proliferation, cytoskeletal organization, lipogenesis and anabolic output. In response to growth factors, mTORC2 phosphorylates and activates AGC protein kinase family members, including AKT (AKT1, AKT2 and AKT3), PKC (PRKCA, PRKCB and PRKCE) and SGK1. In contrast to mTORC1, mTORC2 is nutrient-insensitive. mTORC2 plays a critical role in AKT1 activation by mediating phosphorylation of different sites depending on the context, such as 'Thr-450', 'Ser-473', 'Ser-477' or 'Thr-479', facilitating the phosphorylation of the activation loop of AKT1 on 'Thr-308' by PDPK1/PDK1 which is a prerequisite for full activation. mTORC2 also regulates the phosphorylation of SGK1 at 'Ser-422'. mTORC2 may regulate the actin cytoskeleton, through phosphorylation of PRKCA, PXN and activation of the Rho-type guanine nucleotide exchange factors RHOA and RAC1A or RAC1B. The mTORC2 complex also phosphorylates various proteins involved in insulin signaling, such as FBXW8 and IGF2BP1. May also regulate insulin signaling by acting as a tyrosine protein kinase that catalyzes phosphorylation of IGF1R and INSR; additional evidence are however required to confirm this result in vivo. Regulates osteoclastogenesis by adjusting the expression of CEBPB isoforms. Plays an important regulatory role in the circadian clock function; regulates period length and rhythm amplitude of the suprachiasmatic nucleus (SCN) and liver clocks. The protein is Serine/threonine-protein kinase mTOR of Homo sapiens (Human).